We begin with the raw amino-acid sequence, 467 residues long: Ribulose bisphosphate carboxylase large chain (467 aa).

K5 carries the N6,N6,N6-trimethyllysine modification. The substrate site is built by N114 and T164. Catalysis depends on K166, which acts as the Proton acceptor. K168 contributes to the substrate binding site. The Mg(2+) site is built by K192, D194, and E195. At K192 the chain carries N6-carboxylysine. H285 acts as the Proton acceptor in catalysis. 3 residues coordinate substrate: R286, H318, and S370.

Belongs to the RuBisCO large chain family. Type I subfamily. Heterohexadecamer of 8 large chains and 8 small chains; disulfide-linked. The disulfide link is formed within the large subunit homodimers. Mg(2+) is required as a cofactor. In terms of processing, the disulfide bond which can form in the large chain dimeric partners within the hexadecamer appears to be associated with oxidative stress and protein turnover.

The protein localises to the plastid. It is found in the chloroplast. The catalysed reaction is 2 (2R)-3-phosphoglycerate + 2 H(+) = D-ribulose 1,5-bisphosphate + CO2 + H2O. The enzyme catalyses D-ribulose 1,5-bisphosphate + O2 = 2-phosphoglycolate + (2R)-3-phosphoglycerate + 2 H(+). RuBisCO catalyzes two reactions: the carboxylation of D-ribulose 1,5-bisphosphate, the primary event in carbon dioxide fixation, as well as the oxidative fragmentation of the pentose substrate in the photorespiration process. Both reactions occur simultaneously and in competition at the same active site. The protein is Ribulose bisphosphate carboxylase large chain of Eriodictyon californicum (California yerba santa).